The following is a 1435-amino-acid chain: Probable ATP-dependent DNA helicase HFM1 (1435 aa).

One can recognise a Helicase ATP-binding domain in the interval 290-478 (DDLLYTDRNF…WLSDGERPAV (189 aa)). 303-310 (APTGSGKT) provides a ligand contact to ATP. Positions 411–414 (DEVH) match the DEAH box motif. The Helicase C-terminal domain occupies 519–720 (SVIQMYSDQK…DVNIAVEWIR (202 aa)). Residues 777 to 1092 (PTEAGRLMAW…GLDIQQKLTV (316 aa)) form the SEC63 domain. The interval 1109-1139 (KSETQISHSKHSDISTIAGPNKGTTASKKPG) is disordered. Residues 1143–1158 (CNHLCKSKHTCGHDCC) form a C4-type zinc finger. The tract at residues 1295–1315 (GFGNTLSSSTRGSKLPLQESK) is disordered. Residues 1296 to 1306 (FGNTLSSSTRG) are compositionally biased toward polar residues.

The protein belongs to the helicase family. SKI2 subfamily. Requires Zn(2+) as cofactor. Preferentially expressed in testis and ovary.

The catalysed reaction is Couples ATP hydrolysis with the unwinding of duplex DNA by translocating in the 3'-5' direction.. The enzyme catalyses ATP + H2O = ADP + phosphate + H(+). In terms of biological role, required for crossover formation and complete synapsis of homologous chromosomes during meiosis. In Homo sapiens (Human), this protein is Probable ATP-dependent DNA helicase HFM1 (HFM1).